The following is a 658-amino-acid chain: Carnitine O-palmitoyltransferase 2, mitochondrial (658 aa).

The N-terminal 25 residues, 1 to 25, are a transit peptide targeting the mitochondrion; that stretch reads MVARLLLRSWSRGLAVGPGAPCRPL. The Mitochondrial matrix segment spans residues 26-178; that stretch reads STGFEPSQYL…DLLEPEVFHL (153 aa). An N6-succinyllysine modification is found at lysine 69. Lysine 79 carries the post-translational modification N6-acetyllysine. At lysine 85 the chain carries N6-succinyllysine. An intramembrane region (note=Mitochondrial inner membrane) is located at residues 179-208; the sequence is NPAKSDTDTFKRFIRFVPSFLSWYGAYLVN. Over 209–658 the chain is Mitochondrial matrix; that stretch reads AYPLDMSQYY…DALEGKMIKT (450 aa). Lysine 239 carries the post-translational modification N6-acetyllysine; alternate. Lysine 239 carries the post-translational modification N6-succinyllysine; alternate. Residue histidine 372 is the Proton acceptor of the active site. Position 418 is an N6-acetyllysine; alternate (lysine 418). Lysine 418 bears the N6-succinyllysine; alternate mark. Residues lysine 424 and lysine 439 each carry the N6-succinyllysine modification. 452–464 is a CoA binding site; it reads GREFLKKQKLSPD. (R)-carnitine-binding residues include tyrosine 486, serine 488, and threonine 499. Lysine 510 carries the post-translational modification N6-acetyllysine; alternate. The residue at position 510 (lysine 510) is an N6-succinyllysine; alternate.

The protein belongs to the carnitine/choline acetyltransferase family.

The protein localises to the mitochondrion inner membrane. It carries out the reaction (R)-carnitine + hexadecanoyl-CoA = O-hexadecanoyl-(R)-carnitine + CoA. The catalysed reaction is octanoyl-CoA + (R)-carnitine = O-octanoyl-(R)-carnitine + CoA. It catalyses the reaction decanoyl-CoA + (R)-carnitine = O-decanoyl-(R)-carnitine + CoA. The enzyme catalyses dodecanoyl-CoA + (R)-carnitine = O-dodecanoyl-R-carnitine + CoA. It carries out the reaction tetradecanoyl-CoA + (R)-carnitine = O-tetradecanoyl-(R)-carnitine + CoA. The catalysed reaction is (R)-carnitine + octadecanoyl-CoA = O-octadecanoyl-(R)-carnitine + CoA. It catalyses the reaction eicosanoyl-CoA + (R)-carnitine = O-eicosanoyl-(R)-carnitine + CoA. The enzyme catalyses (9Z)-tetradecenoyl-CoA + (R)-carnitine = O-(9Z)-tetradecenoyl-(R)-carnitine + CoA. It carries out the reaction (5Z)-tetradecenoyl-CoA + (R)-carnitine = O-(5Z)-tetradecenoyl-(R)-carnitine + CoA. The catalysed reaction is (R)-carnitine + (9Z)-octadecenoyl-CoA = O-(9Z)-octadecenoyl-(R)-carnitine + CoA. It catalyses the reaction 4,8-dimethylnonanoyl-CoA + (R)-carnitine = O-4,8-dimethylnonanoyl-(R)-carnitine + CoA. It participates in lipid metabolism; fatty acid beta-oxidation. Functionally, involved in the intramitochondrial synthesis of acylcarnitines from accumulated acyl-CoA metabolites. Reconverts acylcarnitines back into the respective acyl-CoA esters that can then undergo beta-oxidation, an essential step for the mitochondrial uptake of long-chain fatty acids and their subsequent beta-oxidation in the mitochondrion. Active with medium (C8-C12) and long-chain (C14-C18) acyl-CoA esters. This is Carnitine O-palmitoyltransferase 2, mitochondrial (CPT2) from Bos taurus (Bovine).